The chain runs to 126 residues: Fatty acid-binding protein 1, liver (126 aa).

It belongs to the calycin superfamily. Fatty-acid binding protein (FABP) family.

It is found in the cytoplasm. Its function is as follows. Binds free fatty acids and their coenzyme A derivatives, bilirubin, and some other small molecules in the cytoplasm. May be involved in intracellular lipid transport. The specificity of axolotl L-FABP differs from that of LB-FABP. This chain is Fatty acid-binding protein 1, liver, found in Ambystoma mexicanum (Axolotl).